A 72-amino-acid chain; its full sequence is Cell division protein ZapB (72 aa).

Residues 2-72 (SLEILDQLEG…RSLLGQIDNV (71 aa)) adopt a coiled-coil conformation. Residues 34–57 (NQQAQQANDELRSENEQLKGEHNN) form a disordered region. Over residues 42–57 (DELRSENEQLKGEHNN) the composition is skewed to basic and acidic residues.

Belongs to the ZapB family. Homodimer. The ends of the coiled-coil dimer bind to each other, forming polymers. Interacts with FtsZ.

The protein localises to the cytoplasm. Its function is as follows. Non-essential, abundant cell division factor that is required for proper Z-ring formation. It is recruited early to the divisome by direct interaction with FtsZ, stimulating Z-ring assembly and thereby promoting cell division earlier in the cell cycle. Its recruitment to the Z-ring requires functional FtsA or ZipA. In Mannheimia succiniciproducens (strain KCTC 0769BP / MBEL55E), this protein is Cell division protein ZapB.